Here is a 122-residue protein sequence, read N- to C-terminus: WUSCHEL-related homeobox 7 (122 aa).

Positions 25-89 (AKCGRWNPTV…NHKARERQKC (65 aa)) form a DNA-binding region, homeobox; WUS-type. Residues 98 to 111 (DHRQDTDLSKPRRD) are compositionally biased toward basic and acidic residues. The interval 98–122 (DHRQDTDLSKPRRDNVRRHQLPAKG) is disordered. A compositionally biased stretch (basic residues) spans 112–122 (NVRRHQLPAKG).

This sequence belongs to the WUS homeobox family.

The protein resides in the nucleus. In terms of biological role, potential transcription factor that plays a central role during developmental processes. The protein is WUSCHEL-related homeobox 7 (WOX7) of Arabidopsis thaliana (Mouse-ear cress).